The following is a 405-amino-acid chain: 3-hydroxy-3-methylglutaryl-coenzyme A reductase (405 aa).

Catalysis depends on charge relay system residues Glu-100 and Asp-310. His-400 functions as the Proton donor in the catalytic mechanism.

The protein belongs to the HMG-CoA reductase family.

It carries out the reaction (R)-mevalonate + 2 NADP(+) + CoA = (3S)-3-hydroxy-3-methylglutaryl-CoA + 2 NADPH + 2 H(+). It functions in the pathway metabolic intermediate biosynthesis; (R)-mevalonate biosynthesis; (R)-mevalonate from acetyl-CoA: step 3/3. Its function is as follows. Converts HMG-CoA to mevalonate. This Methanocaldococcus jannaschii (strain ATCC 43067 / DSM 2661 / JAL-1 / JCM 10045 / NBRC 100440) (Methanococcus jannaschii) protein is 3-hydroxy-3-methylglutaryl-coenzyme A reductase (hmgA).